We begin with the raw amino-acid sequence, 825 residues long: 5-methyltetrahydropteroyltriglutamate--homocysteine methyltransferase (825 aa).

5-methyltetrahydropteroyltri-L-glutamate contacts are provided by lysine 19 and asparagine 148. Residues 498 to 500 and glutamate 551 each bind L-homocysteine; that span reads IGS. L-methionine-binding positions include 498 to 500 and glutamate 551; that span reads IGS. 5-methyltetrahydropteroyltri-L-glutamate is bound by residues aspartate 556, tyrosine 579, 582–583, and tryptophan 628; that span reads RC. An L-homocysteine-binding site is contributed by aspartate 666. Position 666 (aspartate 666) interacts with L-methionine. 3 residues coordinate Zn(2+): histidine 708, cysteine 710, and glutamate 732. Histidine 761 serves as the catalytic Proton donor. Zn(2+) is bound at residue cysteine 793.

Belongs to the vitamin-B12 independent methionine synthase family. Zn(2+) is required as a cofactor.

The enzyme catalyses 5-methyltetrahydropteroyltri-L-glutamate + L-homocysteine = tetrahydropteroyltri-L-glutamate + L-methionine. Its pathway is amino-acid biosynthesis; L-methionine biosynthesis via de novo pathway; L-methionine from L-homocysteine (MetE route): step 1/1. Its function is as follows. Catalyzes the transfer of a methyl group from 5-methyltetrahydrofolate to homocysteine resulting in methionine formation. The polypeptide is 5-methyltetrahydropteroyltriglutamate--homocysteine methyltransferase (metE) (Dictyostelium discoideum (Social amoeba)).